Consider the following 144-residue polypeptide: Large ribosomal subunit protein uL11 (144 aa).

The protein belongs to the universal ribosomal protein uL11 family. Part of the ribosomal stalk of the 50S ribosomal subunit. Interacts with L10 and the large rRNA to form the base of the stalk. L10 forms an elongated spine to which L12 dimers bind in a sequential fashion forming a multimeric L10(L12)X complex. Post-translationally, one or more lysine residues are methylated.

Functionally, forms part of the ribosomal stalk which helps the ribosome interact with GTP-bound translation factors. The chain is Large ribosomal subunit protein uL11 from Streptomyces sp. (strain FRI-5).